Reading from the N-terminus, the 206-residue chain is Small ribosomal subunit protein uS4 (206 aa).

The 61-residue stretch at 93 to 153 folds into the S4 RNA-binding domain; that stretch reads TRLDALVLRA…PKSQTMVPFQ (61 aa).

This sequence belongs to the universal ribosomal protein uS4 family. Part of the 30S ribosomal subunit. Contacts protein S5. The interaction surface between S4 and S5 is involved in control of translational fidelity.

Functionally, one of the primary rRNA binding proteins, it binds directly to 16S rRNA where it nucleates assembly of the body of the 30S subunit. With S5 and S12 plays an important role in translational accuracy. The polypeptide is Small ribosomal subunit protein uS4 (Bifidobacterium animalis subsp. lactis (strain AD011)).